The following is a 140-amino-acid chain: Putative pre-16S rRNA nuclease (140 aa).

It belongs to the YqgF nuclease family.

The protein localises to the cytoplasm. In terms of biological role, could be a nuclease involved in processing of the 5'-end of pre-16S rRNA. In Serratia proteamaculans (strain 568), this protein is Putative pre-16S rRNA nuclease.